The sequence spans 390 residues: Cytochrome b (390 aa).

4 helical membrane-spanning segments follow: residues 32–52 (MGSLLGLCLVIQILTGIFMAM), 76–98 (WFLRYAHANGASFFFICMYIHMG), 113–133 (LWTIGVIIFILTMATAFLGYC), and 179–199 (FFALHYLFPFVIAAVVIMHMM). Residues histidine 82 and histidine 96 each coordinate heme b. Heme b is bound by residues histidine 183 and histidine 197. Histidine 202 is an a ubiquinone binding site. Transmembrane regions (helical) follow at residues 225 to 245 (FVFKDLITVFVFLIVFSLFVF), 289 to 309 (LMGVITMFSAILVLLVLPFTD), 321 to 341 (LSKLFFFLFVFNFVLLGQIGA), and 348 to 368 (YILMGQISTFLYFAYFLVFIP).

Belongs to the cytochrome b family. Fungal cytochrome b-c1 complex contains 10 subunits; 3 respiratory subunits, 2 core proteins and 5 low-molecular weight proteins. Cytochrome b-c1 complex is a homodimer. Heme b serves as cofactor.

The protein localises to the mitochondrion inner membrane. Functionally, component of the ubiquinol-cytochrome c reductase complex (complex III or cytochrome b-c1 complex) that is part of the mitochondrial respiratory chain. The b-c1 complex mediates electron transfer from ubiquinol to cytochrome c. Contributes to the generation of a proton gradient across the mitochondrial membrane that is then used for ATP synthesis. The chain is Cytochrome b (COB) from Naumovozyma castellii (Yeast).